Reading from the N-terminus, the 72-residue chain is PAMP-induced secreted peptide 1 (72 aa).

Positions 1 to 30 (MRRVSWSTVLIVVVMVSLFFVEHVVVPAAA) are cleaved as a signal peptide. Residues proline 65 and proline 67 each carry the 4-hydroxyproline modification.

Post-translationally, contains 4-hydroxyproline; hydroxylated on Pro-65 and Pro-67. In terms of tissue distribution, expressed in guard cells, hydathodes, leaf trichomes, and vascular tissues of leaves and roots.

The protein localises to the secreted. The protein resides in the extracellular space. It localises to the apoplast. Its function is as follows. Endogenous secreted peptide that acts as elicitor of immune response and positive regulator of defense response. Amplifies the immune response triggered by flg22, the active epitope of bacterial flagellin. Acts as a negative regulator of root growth. This is PAMP-induced secreted peptide 1 from Arabidopsis thaliana (Mouse-ear cress).